The chain runs to 195 residues: Ethylene-responsive transcription factor ERF018 (195 aa).

A compositionally biased stretch (basic and acidic residues) spans M1–R13. Residues M1–K22 form a disordered region. Positions K20 to P77 form a DNA-binding region, AP2/ERF.

The protein belongs to the AP2/ERF transcription factor family. ERF subfamily.

The protein localises to the nucleus. Functionally, probably acts as a transcriptional activator. Binds to the GCC-box pathogenesis-related promoter element. May be involved in the regulation of gene expression by stress factors and by components of stress signal transduction pathways. The protein is Ethylene-responsive transcription factor ERF018 (ERF018) of Arabidopsis thaliana (Mouse-ear cress).